The primary structure comprises 433 residues: Putative ankyrin repeat protein R784 (433 aa).

ANK repeat units lie at residues 44–70, 71–101, 102–131, 179–205, 206–235, 237–264, 265–294, 296–321, 322–351, and 380–409; these read NQNLVLECAIEVDNIYIINKLIDKTDV, NGLKFVMRWSALHGSFQIIKSIIRKDHNNDL, LDLHAINWSIESNHLHISKYLIDKYNIVII, FYDSMIELACLYGHVHVVQYFIDNQCS, VRQKWLYYSCLSGNFDLVKLLCKNGCRIFS, RRLINTAITGGNLDIVRYCLLHSKIDLA, QNNFAMKIAIKTGHIGIVRLLVSHGSDIHF, NGECMIIASRGGFANIVKFFLENKVY, MSEKVLKIAAIRGYLDIIKVFIKYASACMS, and NMRKILIWSLINNRINIVTYLLEIFPKLRE.

The chain is Putative ankyrin repeat protein R784 from Acanthamoeba polyphaga mimivirus (APMV).